The sequence spans 474 residues: Protein IFIT1 homolog B (474 aa).

TPR repeat units lie at residues 52–85 (VGIH…IQKE), 95–128 (LVTW…CKKF), 141–174 (VDCE…NPEN), 182–216 (AITV…NPDD), 218–250 (YIRV…ISSQ), 251–284 (AYVF…TPTS), 305–339 (ATNW…KRTF), 340–373 (EMAY…KIFE), 378–412 (QEIH…EKMS), and 437–470 (VESV…AADL).

The protein belongs to the IFIT family.

Its function is as follows. IFIT1B is likely non-functional, lacking the critical antiviral role of IFIT1. Unlike IFIT1, which is essential in the innate immune response as part of an interferon-dependent multiprotein complex, IFIT1B does not prevent the translation of viral RNAs that lack host-specific 2'-O-methylation at their 5' cap. Consequently, it probably cannot inhibit their translation by competing with the host translation machinery. The protein is Protein IFIT1 homolog B of Homo sapiens (Human).